Here is a 66-residue protein sequence, read N- to C-terminus: Brevinin-1DYb (66 aa).

The signal sequence occupies residues 1-22 (MFTLKKSLLLLFFLGTISLSLC). The propeptide occupies 23–44 (EEERNAEEERRDYPEERDVEVE). A disulfide bridge connects residues cysteine 60 and cysteine 66.

Expressed by the skin glands.

Its subcellular location is the secreted. Antimicrobial peptide. Has low activity against the Gram-positive bacterium S.aureus and the Gram-negative bacterium E.coli (MIC&lt;15 uM). Has a strong hemolytic activity. The chain is Brevinin-1DYb from Rana dybowskii (Dybovsky's frog).